The chain runs to 562 residues: Dihydroxy-acid dehydratase (562 aa).

Asp78 is a binding site for Mg(2+). Residue Cys119 coordinates [2Fe-2S] cluster. Mg(2+) contacts are provided by Asp120 and Lys121. The residue at position 121 (Lys121) is an N6-carboxylysine. Cys192 provides a ligand contact to [2Fe-2S] cluster. Glu449 is a Mg(2+) binding site. Ser475 (proton acceptor) is an active-site residue.

The protein belongs to the IlvD/Edd family. Homodimer. It depends on [2Fe-2S] cluster as a cofactor. Mg(2+) is required as a cofactor.

The enzyme catalyses (2R)-2,3-dihydroxy-3-methylbutanoate = 3-methyl-2-oxobutanoate + H2O. It carries out the reaction (2R,3R)-2,3-dihydroxy-3-methylpentanoate = (S)-3-methyl-2-oxopentanoate + H2O. It functions in the pathway amino-acid biosynthesis; L-isoleucine biosynthesis; L-isoleucine from 2-oxobutanoate: step 3/4. The protein operates within amino-acid biosynthesis; L-valine biosynthesis; L-valine from pyruvate: step 3/4. Functions in the biosynthesis of branched-chain amino acids. Catalyzes the dehydration of (2R,3R)-2,3-dihydroxy-3-methylpentanoate (2,3-dihydroxy-3-methylvalerate) into 2-oxo-3-methylpentanoate (2-oxo-3-methylvalerate) and of (2R)-2,3-dihydroxy-3-methylbutanoate (2,3-dihydroxyisovalerate) into 2-oxo-3-methylbutanoate (2-oxoisovalerate), the penultimate precursor to L-isoleucine and L-valine, respectively. The chain is Dihydroxy-acid dehydratase from Aliarcobacter butzleri (strain RM4018) (Arcobacter butzleri).